The following is a 276-amino-acid chain: Transmembrane protein 53 (276 aa).

The helical transmembrane segment at 170–190 threads the bilayer; it reads LLLLAAFALVVILFHFLLAPF.

This sequence belongs to the TMEM53 family. Expressed in liver (at protein level).

Its subcellular location is the nucleus outer membrane. In terms of biological role, negatively regulates bone morphogenetic protein (BMP) signaling in osteoblast lineage cells by blocking cytoplasm-nucleus translocation of phosphorylated SMAD1/5/9 proteins. This is Transmembrane protein 53 (Tmem53) from Mus musculus (Mouse).